Reading from the N-terminus, the 284-residue chain is Aquaporin NIP1-1 (284 aa).

The segment covering 1-12 (MAGGDNNSQTTN) has biased composition (polar residues). Residues 1-28 (MAGGDNNSQTTNGGSGHEQRAMEEGRKQ) are disordered. Residues 17–28 (HEQRAMEEGRKQ) show a composition bias toward basic and acidic residues. The next 2 membrane-spanning stretches (helical) occupy residues 50 to 70 (IIAE…AVTI) and 78 to 98 (ITFP…VYAV). The short motif at 107 to 109 (NPA) is the NPA 1 element. A run of 3 helical transmembrane segments spans residues 129 to 149 (AAAQ…MFGG), 166 to 186 (SLVL…GVAT), and 194 to 214 (LAGL…GPIS). Positions 219–221 (NPA) match the NPA 2 motif. The chain crosses the membrane as a helical span at residues 236 to 256 (IWVYIVGPVAGAVAGAWAYNI).

The protein belongs to the MIP/aquaporin (TC 1.A.8) family. NIP (TC 1.A.8.12) subfamily. As to expression, expressed in leaves and at lower levels in roots and anthers.

Its subcellular location is the membrane. In terms of biological role, aquaporins facilitate the transport of water and small neutral solutes across cell membranes. The polypeptide is Aquaporin NIP1-1 (NIP1-1) (Oryza sativa subsp. japonica (Rice)).